A 77-amino-acid polypeptide reads, in one-letter code: Beta-defensin 135 (77 aa).

Positions 1 to 24 (MATRSVLLALVVLNLLFYVPPGRS) are cleaved as a signal peptide. 3 disulfides stabilise this stretch: Cys-37–Cys-64, Cys-44–Cys-58, and Cys-48–Cys-65.

This sequence belongs to the beta-defensin family.

Its subcellular location is the secreted. Has antibacterial activity. The polypeptide is Beta-defensin 135 (DEFB135) (Homo sapiens (Human)).